We begin with the raw amino-acid sequence, 375 residues long: MKKVVVGLSGGVDSAVSALLLKKAGYEVEAVFMRNWDSQLNFDFQGNPTLNDVCPQELDYKDALKVSLQLGIKLHRVNFIEEYWQKVFLYFINAFKNNLTPNPDILCNNEIKFKAFINYATSKLKPQYIAMGHYARLIYDKNQKVSLACPLDKNKDQTYFLSQLKTSQLKNILFPLADLTKKEVRKIALENGLINACKKDSTGICFIGERNFFQFLNNYLPAQKGSIKRLDGTFLTYHKGVIHYTIGQRKNLGLGNFSSGQEPFFVVGKNLKTNTLYVEPNSQHPHLYSDRALIIDVTWRGEKTKTQIQAKMRYRQPNQKVTLNWLDANTLEILYPQKIKAVTPGQICAFYDDDICLGAGVIKEVYFQNQKRLYT.

ATP is bound by residues 7 to 14 (GLSGGVDS) and methionine 33. An interaction with target base in tRNA region spans residues 102–104 (NPD). Catalysis depends on cysteine 107, which acts as the Nucleophile. Cysteine 107 and cysteine 205 are disulfide-bonded. Residue glycine 132 participates in ATP binding. The segment at 155–157 (KDQ) is interaction with tRNA. Residue cysteine 205 is the Cysteine persulfide intermediate of the active site. Residues 313 to 314 (RY) form an interaction with tRNA region.

The protein belongs to the MnmA/TRMU family.

It is found in the cytoplasm. The catalysed reaction is S-sulfanyl-L-cysteinyl-[protein] + uridine(34) in tRNA + AH2 + ATP = 2-thiouridine(34) in tRNA + L-cysteinyl-[protein] + A + AMP + diphosphate + H(+). Its function is as follows. Catalyzes the 2-thiolation of uridine at the wobble position (U34) of tRNA, leading to the formation of s(2)U34. This is tRNA-specific 2-thiouridylase MnmA from Phytoplasma australiense.